A 458-amino-acid polypeptide reads, in one-letter code: Cysteine--tRNA ligase (458 aa).

Position 28 (cysteine 28) interacts with Zn(2+). Residues 30–40 carry the 'HIGH' region motif; the sequence is VTVYDLCHFGH. The Zn(2+) site is built by cysteine 209, histidine 234, and glutamate 238. Residues 266 to 270 carry the 'KMSKS' region motif; sequence KMSKS. Lysine 269 contributes to the ATP binding site.

Belongs to the class-I aminoacyl-tRNA synthetase family. In terms of assembly, monomer. Zn(2+) is required as a cofactor.

It localises to the cytoplasm. The enzyme catalyses tRNA(Cys) + L-cysteine + ATP = L-cysteinyl-tRNA(Cys) + AMP + diphosphate. This chain is Cysteine--tRNA ligase, found in Mannheimia succiniciproducens (strain KCTC 0769BP / MBEL55E).